Here is a 724-residue protein sequence, read N- to C-terminus: Degenerin mec-10 (724 aa).

Positions 1–15 are enriched in polar residues; that stretch reads MNRNPRMSKFQPNPR. A disordered region spans residues 1–22; it reads MNRNPRMSKFQPNPRSRSRFQD. Residues 1 to 122 lie on the Cytoplasmic side of the membrane; that stretch reads MNRNPRMSKF…GQAPNSLYRA (122 aa). A helical membrane pass occupies residues 123–143; that stretch reads AWVFLLLICAIQFINQAVAVI. Residues 144 to 684 lie on the Extracellular side of the membrane; sequence QKYQKMDKIT…FGGHLGLWSG (541 aa). Positions 229–265 are disordered; it reads KRGAGEKGTFEPANSACECDEEDGSNECEERSTEKPS. Positions 246–255 are enriched in acidic residues; sequence ECDEEDGSNE. Over residues 256 to 265 the composition is skewed to basic and acidic residues; the sequence is CEERSTEKPS. Asn-293, Asn-369, Asn-463, Asn-605, and Asn-624 each carry an N-linked (GlcNAc...) asparagine glycan. The chain crosses the membrane as a helical span at residues 685–705; sequence VSVMTCCEFVCLAFELIYMAI. At 706–724 the chain is on the cytoplasmic side; it reads AHHINQQRIRRRENAANEY.

Belongs to the amiloride-sensitive sodium channel (TC 1.A.6) family. As to quaternary structure, component of a non-voltage-gated amiloride-sensitive cation channel complex (also called the degenerin channel complex) composed of at least the mec-2, mec-4, mec-6 and mec-10 subunits; the complex mediates mechanotransduction in touch cells. Interacts with mec-4 and mec-6.

The protein localises to the cell membrane. Subunit of an amiloride-sensitive cation channel (degenerin channel complex) permeable for sodium, potassium, lithium and N-methylglucamine, and required for mechanosensory transduction (touch sensitivity). Negatively regulates the turning step of male mating behavior. The sequence is that of Degenerin mec-10 from Caenorhabditis elegans.